The chain runs to 94 residues: Acylphosphatase (94 aa).

The Acylphosphatase-like domain maps to 7–94 (AALVRITGRV…EAPAGFRITR (88 aa)). Residues R22 and N40 contribute to the active site.

It belongs to the acylphosphatase family.

It carries out the reaction an acyl phosphate + H2O = a carboxylate + phosphate + H(+). The chain is Acylphosphatase (acyP) from Sinorhizobium medicae (strain WSM419) (Ensifer medicae).